A 413-amino-acid chain; its full sequence is Multifunctional CCA protein (413 aa).

2 residues coordinate ATP: Gly8 and Arg11. CTP is bound by residues Gly8 and Arg11. Positions 21 and 23 each coordinate Mg(2+). ATP is bound by residues Arg91, Arg143, and Arg146. Residues Arg91, Arg143, and Arg146 each coordinate CTP. In terms of domain architecture, HD spans 232 to 333 (TGVHVMMVVD…VRLFERSDAL (102 aa)).

This sequence belongs to the tRNA nucleotidyltransferase/poly(A) polymerase family. Bacterial CCA-adding enzyme type 1 subfamily. As to quaternary structure, monomer. Can also form homodimers and oligomers. The cofactor is Mg(2+). Ni(2+) is required as a cofactor.

It catalyses the reaction a tRNA precursor + 2 CTP + ATP = a tRNA with a 3' CCA end + 3 diphosphate. The enzyme catalyses a tRNA with a 3' CCA end + 2 CTP + ATP = a tRNA with a 3' CCACCA end + 3 diphosphate. Functionally, catalyzes the addition and repair of the essential 3'-terminal CCA sequence in tRNAs without using a nucleic acid template. Adds these three nucleotides in the order of C, C, and A to the tRNA nucleotide-73, using CTP and ATP as substrates and producing inorganic pyrophosphate. tRNA 3'-terminal CCA addition is required both for tRNA processing and repair. Also involved in tRNA surveillance by mediating tandem CCA addition to generate a CCACCA at the 3' terminus of unstable tRNAs. While stable tRNAs receive only 3'-terminal CCA, unstable tRNAs are marked with CCACCA and rapidly degraded. The protein is Multifunctional CCA protein of Burkholderia cenocepacia (strain ATCC BAA-245 / DSM 16553 / LMG 16656 / NCTC 13227 / J2315 / CF5610) (Burkholderia cepacia (strain J2315)).